The primary structure comprises 313 residues: Cytochrome f (313 aa).

The signal sequence occupies residues 1 to 30 (MRNWSFSKAALTVSLLALSWSPFGPAEVQA). Tyr-31, Cys-51, Cys-54, and His-55 together coordinate heme. Residues 279 to 298 (VQGLIIFFAFVLIAQVFLVL) form a helical membrane-spanning segment.

It belongs to the cytochrome f family. As to quaternary structure, the 4 large subunits of the cytochrome b6-f complex are cytochrome b6, subunit IV (17 kDa polypeptide, petD), cytochrome f and the Rieske protein, while the 4 small subunits are PetG, PetL, PetM and PetN. The complex functions as a dimer. Requires heme as cofactor.

The protein resides in the plastid. Its subcellular location is the chloroplast thylakoid membrane. Its function is as follows. Component of the cytochrome b6-f complex, which mediates electron transfer between photosystem II (PSII) and photosystem I (PSI), cyclic electron flow around PSI, and state transitions. The polypeptide is Cytochrome f (Nephroselmis olivacea (Green alga)).